The following is a 693-amino-acid chain: Subtilisin-like protease SBT4.10 (693 aa).

Residues Met-1–Ala-25 form the signal peptide. The propeptide at Asp-26–His-113 is activation peptide. The region spanning Val-35–His-113 is the Inhibitor I9 domain. The 420-residue stretch at Ser-117 to Ile-536 folds into the Peptidase S8 domain. Asp-145 functions as the Charge relay system in the catalytic mechanism. Asn-176 carries an N-linked (GlcNAc...) asparagine glycan. The active-site Charge relay system is His-200. 5 N-linked (GlcNAc...) asparagine glycosylation sites follow: Asn-215, Asn-223, Asn-368, Asn-413, and Asn-467. One can recognise a PA domain in the interval Gln-354–Leu-396. Catalysis depends on Ser-475, which acts as the Charge relay system. Residues Asn-559, Asn-603, and Asn-613 are each glycosylated (N-linked (GlcNAc...) asparagine).

Belongs to the peptidase S8 family. Post-translationally, the C-terminal propeptide is autocleaved.

The protein resides in the secreted. This chain is Subtilisin-like protease SBT4.10, found in Arabidopsis thaliana (Mouse-ear cress).